Reading from the N-terminus, the 644-residue chain is 1-deoxy-D-xylulose-5-phosphate synthase (644 aa).

Thiamine diphosphate is bound by residues H78 and 120 to 122 (GHA). Residue D149 participates in Mg(2+) binding. Thiamine diphosphate is bound by residues 150–151 (AA), N178, and E373. N178 contacts Mg(2+).

This sequence belongs to the transketolase family. DXPS subfamily. In terms of assembly, homodimer. Mg(2+) serves as cofactor. Thiamine diphosphate is required as a cofactor.

It catalyses the reaction D-glyceraldehyde 3-phosphate + pyruvate + H(+) = 1-deoxy-D-xylulose 5-phosphate + CO2. Its pathway is metabolic intermediate biosynthesis; 1-deoxy-D-xylulose 5-phosphate biosynthesis; 1-deoxy-D-xylulose 5-phosphate from D-glyceraldehyde 3-phosphate and pyruvate: step 1/1. Catalyzes the acyloin condensation reaction between C atoms 2 and 3 of pyruvate and glyceraldehyde 3-phosphate to yield 1-deoxy-D-xylulose-5-phosphate (DXP). This chain is 1-deoxy-D-xylulose-5-phosphate synthase, found in Chlamydia abortus (strain DSM 27085 / S26/3) (Chlamydophila abortus).